The sequence spans 282 residues: Acetyl-coenzyme A carboxylase carboxyl transferase subunit beta (282 aa).

A CoA carboxyltransferase N-terminal domain is found at 23–282 (IWTKCGQCDA…MLSKLHHQQA (260 aa)). Zn(2+) is bound by residues cysteine 27, cysteine 30, cysteine 46, and cysteine 49. The segment at 27–49 (CGQCDAVLYKTELEKQLGVCPKC) adopts a C4-type zinc-finger fold.

Belongs to the AccD/PCCB family. As to quaternary structure, acetyl-CoA carboxylase is a heterohexamer composed of biotin carboxyl carrier protein (AccB), biotin carboxylase (AccC) and two subunits each of ACCase subunit alpha (AccA) and ACCase subunit beta (AccD). Requires Zn(2+) as cofactor.

It localises to the cytoplasm. It catalyses the reaction N(6)-carboxybiotinyl-L-lysyl-[protein] + acetyl-CoA = N(6)-biotinyl-L-lysyl-[protein] + malonyl-CoA. It functions in the pathway lipid metabolism; malonyl-CoA biosynthesis; malonyl-CoA from acetyl-CoA: step 1/1. In terms of biological role, component of the acetyl coenzyme A carboxylase (ACC) complex. Biotin carboxylase (BC) catalyzes the carboxylation of biotin on its carrier protein (BCCP) and then the CO(2) group is transferred by the transcarboxylase to acetyl-CoA to form malonyl-CoA. This chain is Acetyl-coenzyme A carboxylase carboxyl transferase subunit beta, found in Pseudoalteromonas atlantica (strain T6c / ATCC BAA-1087).